Here is a 506-residue protein sequence, read N- to C-terminus: ATP synthase subunit alpha (506 aa).

171–178 (GDRQTGKT) contacts ATP.

This sequence belongs to the ATPase alpha/beta chains family. As to quaternary structure, F-type ATPases have 2 components, CF(1) - the catalytic core - and CF(0) - the membrane proton channel. CF(1) has five subunits: alpha(3), beta(3), gamma(1), delta(1), epsilon(1). CF(0) has four main subunits: a(1), b(1), b'(1) and c(9-12).

The protein resides in the cellular thylakoid membrane. It carries out the reaction ATP + H2O + 4 H(+)(in) = ADP + phosphate + 5 H(+)(out). Produces ATP from ADP in the presence of a proton gradient across the membrane. The alpha chain is a regulatory subunit. The polypeptide is ATP synthase subunit alpha (Trichormus variabilis (strain ATCC 29413 / PCC 7937) (Anabaena variabilis)).